The chain runs to 608 residues: MCGIVGYIGKKEAAPILVEGLSKLEYRGYDSAGVAIIEDQVIRTRKCKGRLVNLEEKLNEESMIGDIGIGHTRWATHGEPSDKNSHPHNNEKGTISVVHNGIIENYIELREWLTSEGYKFVSETDTEVLPHLIDYYYKGDLLEAVMTAISKVEGSYAIGVVCSEEPDKVVAVRKDSPLIVGLGEEEYFIASDIPAVLNHTRDIYLLKDNEFVLMTKDGVKLFDKEGKEIKREIYHVTWNADAAEKGGYDHFMLKEIHEQPKVIKDTMTSRIMLGKDIKLDNIEISKEQMEKINKIYIVACGTAYHAGLVGKYTIEKLARIPVEVDIASEFRYKNPIIDKDTLMIVISQSGETADTLAALREAKKKGARVIAVTNVVGSSISREADDILYTWAGPEIAVASTKAYETQLVAMYILALYFAQEKGTLNKEELEELKEEMLSIPDKAEKCLETDEIMKKLASKTHMKKDMFFLGRGLDYAVALEGSLKLKEISYIHSEAYAAGELKHGPIALIEEGTIVITLATQEELFDKTVSNIKEVTTRGAKAIGIAFEGQKNMDKAVEEAIYIPKTKSIFAPLLSVIPLQLYSYYVSLEKGCDVDKPRNLAKSVTVE.

The active-site Nucleophile; for GATase activity is the Cys-2. Residues 2 to 217 enclose the Glutamine amidotransferase type-2 domain; it reads CGIVGYIGKK…DNEFVLMTKD (216 aa). SIS domains lie at 284-424 and 453-598; these read ISKE…EKGT and IMKK…VDKP. The For Fru-6P isomerization activity role is filled by Lys-603.

As to quaternary structure, homodimer.

The protein resides in the cytoplasm. It carries out the reaction D-fructose 6-phosphate + L-glutamine = D-glucosamine 6-phosphate + L-glutamate. In terms of biological role, catalyzes the first step in hexosamine metabolism, converting fructose-6P into glucosamine-6P using glutamine as a nitrogen source. This Clostridium tetani (strain Massachusetts / E88) protein is Glutamine--fructose-6-phosphate aminotransferase [isomerizing].